A 194-amino-acid chain; its full sequence is Large ribosomal subunit protein eL15 (194 aa).

The disordered stretch occupies residues Arg-168 to Lys-194. Residues Pro-184 to Lys-194 are compositionally biased toward basic residues.

This sequence belongs to the eukaryotic ribosomal protein eL15 family. Part of the 50S ribosomal subunit.

The protein is Large ribosomal subunit protein eL15 of Thermococcus kodakarensis (strain ATCC BAA-918 / JCM 12380 / KOD1) (Pyrococcus kodakaraensis (strain KOD1)).